The primary structure comprises 20 residues: Cytochrome c oxidase subunit 5B heart, mitochondrial (20 aa).

A disordered region spans residues 1-20 (XXLKGIPTDEEQATGLEEYA).

It belongs to the cytochrome c oxidase subunit 5B family. As to quaternary structure, component of the cytochrome c oxidase (complex IV, CIV), a multisubunit enzyme composed of 14 subunits. The complex is composed of a catalytic core of 3 subunits MT-CO1, MT-CO2 and MT-CO3, encoded in the mitochondrial DNA, and 11 supernumerary subunits COX4I, COX5A, COX5B, COX6A, COX6B, COX6C, COX7A, COX7B, COX7C, COX8 and NDUFA4, which are encoded in the nuclear genome. The complex exists as a monomer or a dimer and forms supercomplexes (SCs) in the inner mitochondrial membrane with NADH-ubiquinone oxidoreductase (complex I, CI) and ubiquinol-cytochrome c oxidoreductase (cytochrome b-c1 complex, complex III, CIII), resulting in different assemblies (supercomplex SCI(1)III(2)IV(1) and megacomplex MCI(2)III(2)IV(2)).

The protein localises to the mitochondrion inner membrane. The protein operates within energy metabolism; oxidative phosphorylation. Its function is as follows. Component of the cytochrome c oxidase, the last enzyme in the mitochondrial electron transport chain which drives oxidative phosphorylation. The respiratory chain contains 3 multisubunit complexes succinate dehydrogenase (complex II, CII), ubiquinol-cytochrome c oxidoreductase (cytochrome b-c1 complex, complex III, CIII) and cytochrome c oxidase (complex IV, CIV), that cooperate to transfer electrons derived from NADH and succinate to molecular oxygen, creating an electrochemical gradient over the inner membrane that drives transmembrane transport and the ATP synthase. Cytochrome c oxidase is the component of the respiratory chain that catalyzes the reduction of oxygen to water. Electrons originating from reduced cytochrome c in the intermembrane space (IMS) are transferred via the dinuclear copper A center (CU(A)) of subunit 2 and heme A of subunit 1 to the active site in subunit 1, a binuclear center (BNC) formed by heme A3 and copper B (CU(B)). The BNC reduces molecular oxygen to 2 water molecules using 4 electrons from cytochrome c in the IMS and 4 protons from the mitochondrial matrix. This Oncorhynchus mykiss (Rainbow trout) protein is Cytochrome c oxidase subunit 5B heart, mitochondrial.